A 436-amino-acid chain; its full sequence is 3-ketoacyl-CoA thiolase (436 aa).

Residue C99 is the Acyl-thioester intermediate of the active site. Active-site proton acceptor residues include H392 and C422.

Belongs to the thiolase-like superfamily. Thiolase family. As to quaternary structure, heterotetramer of two alpha chains (FadJ) and two beta chains (FadI).

It localises to the cytoplasm. The catalysed reaction is an acyl-CoA + acetyl-CoA = a 3-oxoacyl-CoA + CoA. Its pathway is lipid metabolism; fatty acid beta-oxidation. In terms of biological role, catalyzes the final step of fatty acid oxidation in which acetyl-CoA is released and the CoA ester of a fatty acid two carbons shorter is formed. This is 3-ketoacyl-CoA thiolase from Shigella boydii serotype 18 (strain CDC 3083-94 / BS512).